The chain runs to 508 residues: tRNA (guanine(37)-N(1))-methyltransferase (508 aa).

A mitochondrion-targeting transit peptide spans 1-53 (MKFNFWKGLWKPKSLTPTLSHRLYRRMYTPQPPLNREMTVLDRSKFTVSLNLA). H253 contacts S-adenosyl-L-methionine. Basic and acidic residues predominate over residues 267 to 284 (RERKQQERAKRENHEKST). The interval 267–291 (RERKQQERAKRENHEKSTETAVEPD) is disordered. S-adenosyl-L-methionine-binding positions include 323–324 (DL), 351–352 (DG), and N402.

This sequence belongs to the class I-like SAM-binding methyltransferase superfamily. TRM5/TYW2 family. As to quaternary structure, monomer.

It is found in the mitochondrion matrix. The protein localises to the nucleus. The protein resides in the cytoplasm. It carries out the reaction guanosine(37) in tRNA + S-adenosyl-L-methionine = N(1)-methylguanosine(37) in tRNA + S-adenosyl-L-homocysteine + H(+). In terms of biological role, specifically methylates the N1 position of guanosine-37 in various cytoplasmic and mitochondrial tRNAs. Methylation is not dependent on the nature of the nucleoside 5' of the target nucleoside. This is the first step in the biosynthesis of wybutosine (yW), a modified base adjacent to the anticodon of tRNAs and required for accurate decoding. This chain is tRNA (guanine(37)-N(1))-methyltransferase, found in Yarrowia lipolytica (strain CLIB 122 / E 150) (Yeast).